Consider the following 313-residue polypeptide: D-alanine--D-alanine ligase (313 aa).

The ATP-grasp domain occupies 108-308; sequence KLVWQQTGVP…YSELVVKVLS (201 aa). 138–193 contacts ATP; it reads VAKLGLPLFVKPASEGSSVAVLKVKTADALPAALSEAATHDKIVIVEKSIEGGGEY. Mg(2+) is bound by residues D262, E275, and N277.

Belongs to the D-alanine--D-alanine ligase family. The cofactor is Mg(2+). Requires Mn(2+) as cofactor.

The protein localises to the cytoplasm. The catalysed reaction is 2 D-alanine + ATP = D-alanyl-D-alanine + ADP + phosphate + H(+). Its pathway is cell wall biogenesis; peptidoglycan biosynthesis. Functionally, cell wall formation. The chain is D-alanine--D-alanine ligase from Burkholderia ambifaria (strain MC40-6).